Reading from the N-terminus, the 82-residue chain is Vejovine (82 aa).

The N-terminal stretch at 1–22 (MNAKTLFVVFLIGMLVTEQVEA) is a signal peptide. Residues 70 to 82 (MTLDEIVDAMYYD) constitute a propeptide that is removed on maturation.

Belongs to the non-disulfide-bridged peptide (NDBP) superfamily. Long chain multifunctional peptide (group 2) family. In terms of tissue distribution, expressed by the venom gland.

The protein localises to the secreted. It localises to the target cell membrane. In terms of biological role, displays significant potent antimicrobial activity against clinical isolates of Gram-negative multidrug resistant strains of E.coli, P.aeruginosa and A.baumanii with MIC values as low as 4.4 uM. Additionally, it displays low cytolytic and hemolytic activity against human erythrocytes reaching 50% hemolysis at 100 uM. This Vaejovis mexicanus (Mexican scorpion) protein is Vejovine.